A 677-amino-acid polypeptide reads, in one-letter code: Levanase (677 aa).

An N-terminal signal peptide occupies residues 1 to 24; that stretch reads MKKRLIQVMIMFTLLLTMAFSADA. Substrate contacts are provided by residues 46–49, Gln65, Trp73, 105–106, 171–172, Glu223, and Trp313; these read WMND, FS, and RD. Asp49 is a catalytic residue.

This sequence belongs to the glycosyl hydrolase 32 family.

The protein resides in the secreted. It catalyses the reaction Hydrolysis of terminal, non-reducing (2-&gt;1)- and (2-&gt;6)-linked beta-D-fructofuranose residues in fructans.. Its activity is regulated as follows. Is completely inhibited by Ag(+) and Hg(2+) ions. In terms of biological role, exo-fructosidase that can hydrolyze both levan and inulin, leading to the production of free fructose. Is also able to hydrolyze sucrose and to a small extent raffinose, but not melezitose, stachylose, cellobiose, maltose, and lactose. The protein is Levanase (sacC) of Bacillus subtilis (strain 168).